We begin with the raw amino-acid sequence, 944 residues long: Protocadherin gamma-C5 (944 aa).

The first 29 residues, 1 to 29 (MGPKTLPQLAGKWQVLCMLSLCCWGWVSG), serve as a signal peptide directing secretion. 6 Cadherin domains span residues 30–133 (QLRY…SPSF), 134–242 (ATPE…APTF), 243–350 (QSSV…APEV), 351–454 (LLAS…APRF), 455–564 (NQQL…APAV), and 571–677 (WEHS…MPKS). Topologically, residues 30–693 (QLRYSVVEES…PPERSDLTLY (664 aa)) are extracellular. Residues Asn-265, Asn-443, and Asn-547 are each glycosylated (N-linked (GlcNAc...) asparagine). A helical transmembrane segment spans residues 694 to 714 (LIVALATVSLLSLVTFTFLSA). Over 715-944 (KCLQGNADGD…KKKSGKKEKK (230 aa)) the chain is Cytoplasmic. 3 disordered regions span residues 722-747 (DGDG…QSSP), 812-853 (SNTL…WPNN), and 914-944 (ATLT…KEKK). The span at 820–853 (QQAPPNTDWRFSQAQRPGTSGSQNGDDTGTWPNN) shows a compositional bias: polar residues. The span at 934 to 944 (NKKKSGKKEKK) shows a compositional bias: basic residues.

Its subcellular location is the cell membrane. In terms of biological role, potential calcium-dependent cell-adhesion protein. May be involved in the establishment and maintenance of specific neuronal connections in the brain. In Pan troglodytes (Chimpanzee), this protein is Protocadherin gamma-C5 (PCDHGC5).